A 498-amino-acid polypeptide reads, in one-letter code: Peptidase inhibitor 16 (498 aa).

A signal peptide spans 1 to 29 (MHGSCSPWVMLPPPLLLLLLLIATGPTTA). One can recognise an SCP domain in the interval 39 to 167 (VDLHNQYRAQ…ANIHLLVCNY (129 aa)). N116 carries an N-linked (GlcNAc...) asparagine glycan. Disordered regions lie at residues 204 to 277 (NPEK…GPSS), 317 to 407 (PKSM…SPLS), and 419 to 467 (ERGG…ENPE). Polar residues-rich tracts occupy residues 218–277 (VPST…GPSS) and 344–353 (LTESGESVPQ). The segment covering 367–380 (PEAILPEAEAAPTE) has biased composition (low complexity). Residues 383–397 (VELREPEAESPKAES) show a composition bias toward basic and acidic residues. Polar residues predominate over residues 437-447 (SLPTFPSASGN). Residue N447 is glycosylated (N-linked (GlcNAc...) asparagine).

It belongs to the CRISP family. In terms of assembly, interacts with PSP94/MSMB. In terms of processing, N-glycosylated. In terms of tissue distribution, expressed strongly in aorta and skin, and weakly in adipose tissue (at protein level). In heart, found in the extracellular space surrounding cardiomyocytes (at protein level).

It localises to the secreted. Its function is as follows. May inhibit cardiomyocyte growth. The protein is Peptidase inhibitor 16 (Pi16) of Mus musculus (Mouse).